A 224-amino-acid polypeptide reads, in one-letter code: uncharacterized protein (224 aa).

It localises to the virion. This is an uncharacterized protein from Acanthamoeba polyphaga mimivirus (APMV).